The following is a 678-amino-acid chain: Protein CASP (678 aa).

Topologically, residues 1–619 are cytoplasmic; the sequence is MAANVGSMSQ…LILSNKTART (619 aa). Coiled coils occupy residues 16 to 40, 67 to 374, 427 to 454, and 502 to 556; these read DLQQ…ESEQ, LLKS…TLKS, HLTE…TIQS, and LSII…FLQS. Ser586 bears the Phosphoserine mark. The helical; Anchor for type IV membrane protein transmembrane segment at 620–640 threads the bilayer; sequence IGFFYTLFLHCLVFLVLYKLA. Over 641–678 the chain is Lumenal; the sequence is WSESVERDCAATCAKKFADHLHKFHESDNGAAAGDLWQ.

The protein belongs to the CASP family. Homodimer; disulfide-linked. Interacts with GOLGA5. Ubiquitously expressed.

It localises to the golgi apparatus membrane. In terms of biological role, may be involved in intra-Golgi retrograde transport. The polypeptide is Protein CASP (Cux1) (Mus musculus (Mouse)).